The following is a 127-amino-acid chain: Glycine cleavage system H protein 2 (127 aa).

The Lipoyl-binding domain maps to 24–105 (SVTVGISDHA…PYGSWIFKLK (82 aa)). K65 carries the post-translational modification N6-lipoyllysine.

The protein belongs to the GcvH family. As to quaternary structure, the glycine cleavage system is composed of four proteins: P, T, L and H. The cofactor is (R)-lipoate.

In terms of biological role, the glycine cleavage system catalyzes the degradation of glycine. The H protein shuttles the methylamine group of glycine from the P protein to the T protein. This is Glycine cleavage system H protein 2 from Pseudomonas putida (strain ATCC 47054 / DSM 6125 / CFBP 8728 / NCIMB 11950 / KT2440).